The primary structure comprises 1182 residues: CRISPR-associated endoribonuclease Cas13a (1182 aa).

A coiled-coil region spans residues 132 to 279 (FNNLIEKVQN…ENNSDNKLKQ (148 aa)). The HEPN-like fold 1 stretch occupies residues 366–508 (YIKNTGQLET…NNEEIKGYFI (143 aa)). Positions 896 to 955 (KVEKENIEDYNKKEEIEQKKKSNIEKLQDLKVELHKKWEQNKITEKEIEKYNNTTRKINE) form a coiled coil. The interval 965 to 1120 (LQNVYLLHEM…QNHILKSTKT (156 aa)) is HEPN-like fold 2.

This sequence belongs to the CRISPR-associated endoribonuclease Cas13a family. The cofactor is a divalent metal cation.

With respect to regulation, target RNA acts as an activator for non-specific ssRNA degradation. In terms of biological role, CRISPR (clustered regularly interspaced short palindromic repeat), is an adaptive immune system that provides protection against mobile genetic elements (viruses, transposable elements and conjugative plasmids). CRISPR clusters contain sequences complementary to antecedent mobile elements and target invading nucleic acids. Unlike many single-component effectors, this CRISPR-Cas system targets RNA. CRISPR clusters are transcribed from pre-CRISPR RNA (crRNA) and processed into crRNA by this protein. Cleaves linear target ssRNA in a pre-crRNA-dependent fashion, preferentially before U residues. Binding a viable target RNA target activates this protein for non-specific RNA degradation in vitro (called collateral RNA degradation), which is fairly sensitive as it requires picomolar levels of viable target RNA. The chain is CRISPR-associated endoribonuclease Cas13a from Leptotrichia wadei (strain F0279).